Consider the following 777-residue polypeptide: Glucocorticoid receptor (777 aa).

The span at 1–14 (MDSKESLTPGKEEN) shows a compositional bias: basic and acidic residues. The interval 1–22 (MDSKESLTPGKEENPSSVLTQE) is disordered. Residues 1-420 (MDSKESLTPG…TATTGPPPKL (420 aa)) form a modulating region. Thr-8 is modified (phosphothreonine). Omega-N-methylarginine is present on Arg-23. Phosphoserine occurs at positions 45, 113, 134, and 141. Residues 130–183 (NRSTSVPENPKSSASSSVSAAPKEKEFPKTHSDVSSEQQNLKGQTGTNGGNAKL) form a disordered region. Residues 134 to 150 (SVPENPKSSASSSVSAA) are compositionally biased toward low complexity. Positions 151–163 (PKEKEFPKTHSDV) are enriched in basic and acidic residues. The segment covering 164–174 (SSEQQNLKGQT) has biased composition (polar residues). Residues Ser-203, Ser-211, and Ser-226 each carry the phosphoserine modification. A Glycyl lysine isopeptide (Lys-Gly) (interchain with G-Cter in SUMO2) cross-link involves residue Lys-258. Ser-267 carries the post-translational modification Phosphoserine. Residues Lys-277 and Lys-293 each participate in a glycyl lysine isopeptide (Lys-Gly) (interchain with G-Cter in SUMO); alternate cross-link. Residues Lys-277 and Lys-293 each participate in a glycyl lysine isopeptide (Lys-Gly) (interchain with G-Cter in SUMO2); alternate cross-link. Residues 394–414 (SSPSMRPDVSSPPSSSSTATT) are compositionally biased toward low complexity. The tract at residues 394-415 (SSPSMRPDVSSPPSSSSTATTG) is disordered. The residue at position 404 (Ser-404) is a Phosphoserine. Lys-419 is covalently cross-linked (Glycyl lysine isopeptide (Lys-Gly) (interchain with G-Cter in ubiquitin)). 2 consecutive NR C4-type zinc fingers follow at residues 421–441 (CLVC…CGSC) and 457–481 (CAGR…YRKC). The segment at residues 421–486 (CLVCSDEASG…RYRKCLQAGM (66 aa)) is a DNA-binding region (nuclear receptor). Residues Lys-480, Lys-492, Lys-494, and Lys-495 each carry the N6-acetyllysine modification. Residues 485–777 (GMNLEARKTK…NIRKLLFHQK (293 aa)) are interaction with CLOCK. The hinge stretch occupies residues 487-523 (NLEARKTKKKIKGIQQATTGVSQETSENPANKTIVPA). Residues 524-758 (TLPQLTPTLV…FPEMLAEIIT (235 aa)) enclose the NR LBD domain. Residues 532–697 (LVSLLEVIEP…EIRMTYIKEL (166 aa)) are interaction with CRY1. A Glycyl lysine isopeptide (Lys-Gly) (interchain with G-Cter in SUMO) cross-link involves residue Lys-703.

It belongs to the nuclear hormone receptor family. NR3 subfamily. As to quaternary structure, heteromultimeric cytoplasmic complex with HSP90AA1, HSPA1A/HSPA1B, and FKBP5 or another immunophilin such as PPID, STIP1, or the immunophilin homolog PPP5C. Upon ligand binding FKBP5 dissociates from the complex and FKBP4 takes its place, thereby linking the complex to dynein and mediating transport to the nucleus, where the complex dissociates. Probably forms a complex composed of chaperones HSP90 and HSP70, co-chaperones CDC37, PPP5C, TSC1 and client protein TSC2, CDK4, AKT, RAF1 and NR3C1; this complex does not contain co-chaperones STIP1/HOP and PTGES3/p23. Directly interacts with UNC45A. Binds to DNA as a homodimer, and as heterodimer with NR3C2 or the retinoid X receptor. Binds STAT5A and STAT5B homodimers and heterodimers. Interacts with NRIP1, POU2F1, POU2F2 and TRIM28. Interacts with several coactivator complexes, including the SMARCA4 complex, CREBBP/EP300, TADA2L (Ada complex) and p160 coactivators such as NCOA2 and NCOA6. Interaction with BAG1 inhibits transactivation. Interacts with HEXIM1 and TGFB1I1. Interacts with NCOA1. Interacts with NCOA3, SMARCA4, SMARCC1, SMARCD1, and SMARCE1. Interacts with CLOCK, CRY1 and CRY2 in a ligand-dependent fashion. Interacts with CIART. Interacts with RWDD3. Interacts with UBE2I/UBC9 and this interaction is enhanced in the presence of RWDD3. Interacts with GRIP1. Interacts with NR4A3 (via nuclear receptor DNA-binding domain), represses transcription activity of NR4A3 on the POMC promoter Nur response element (NurRE). Directly interacts with PNRC2 to attract and form a complex with UPF1 and DCP1A; the interaction leads to rapid mRNA degradation. Interacts with GSK3B. Interacts with FNIP1 and FNIP2. Interacts (via C-terminus) with HNRNPU (via C-terminus). Interacts with MCM3AP. Interacts (via domain NR LBD) with HSP90AA1 and HSP90AB1. In the absence of hormonal ligand, interacts with TACC1. Interacts (via NR LBD domain) with ZNF764 (via KRAB domain); the interaction regulates transcription factor activity of NR3C1 by directing its actions toward certain biologic pathways. Acetylation by CLOCK reduces its binding to glucocorticoid response elements and its transcriptional activity. In terms of processing, increased proteasome-mediated degradation in response to glucocorticoids. Post-translationally, phosphorylated in the absence of hormone; becomes hyperphosphorylated in the presence of glucocorticoid. The Ser-203, Ser-226 and Ser-404-phosphorylated forms are mainly cytoplasmic, and the Ser-211-phosphorylated form is nuclear. Phosphorylation at Ser-211 increases transcriptional activity. Phosphorylation at Ser-203, Ser-226 and Ser-404 decreases signaling capacity. Phosphorylation at Ser-404 may protect from glucocorticoid-induced apoptosis. Phosphorylation at Ser-203 and Ser-211 is not required in regulation of chromosome segregation. May be dephosphorylated by PPP5C, attenuates NR3C1 action. Ubiquitinated by UBR5, leading to its degradation: UBR5 specifically recognizes and binds ligand-bound NR3C1 when it is not associated with coactivators (NCOAs). In presence of NCOAs, the UBR5-degron is not accessible, preventing its ubiquitination and degradation. In terms of processing, sumoylation at Lys-277 and Lys-293 negatively regulates its transcriptional activity. Sumoylation at Lys-703 positively regulates its transcriptional activity in the presence of RWDD3. Sumoylation at Lys-277 and Lys-293 is dispensable whereas sumoylation at Lys-703 is critical for the stimulatory effect of RWDD3 on its transcriptional activity. Heat shock increases sumoylation in a RWDD3-dependent manner.

It localises to the cytoplasm. Its subcellular location is the nucleus. The protein resides in the mitochondrion. The protein localises to the cytoskeleton. It is found in the spindle. It localises to the microtubule organizing center. Its subcellular location is the centrosome. The protein resides in the chromosome. The protein localises to the nucleoplasm. In terms of biological role, receptor for glucocorticoids (GC). Has a dual mode of action: as a transcription factor that binds to glucocorticoid response elements (GRE), both for nuclear and mitochondrial DNA, and as a modulator of other transcription factors. Affects inflammatory responses, cellular proliferation and differentiation in target tissues. Involved in chromatin remodeling. Plays a role in rapid mRNA degradation by binding to the 5' UTR of target mRNAs and interacting with PNRC2 in a ligand-dependent manner which recruits the RNA helicase UPF1 and the mRNA-decapping enzyme DCP1A, leading to RNA decay. Could act as a coactivator for STAT5-dependent transcription upon growth hormone (GH) stimulation and could reveal an essential role of hepatic GR in the control of body growth. Mediates glucocorticoid-induced apoptosis. Promotes accurate chromosome segregation during mitosis. May act as a tumor suppressor. May play a negative role in adipogenesis through the regulation of lipolytic and antilipogenic gene expression. In Saguinus oedipus (Cotton-top tamarin), this protein is Glucocorticoid receptor (NR3C1).